Consider the following 324-residue polypeptide: Bile salt hydrolase/transferase (324 aa).

The Nucleophile; acyl-thioester intermediate role is filled by C2. Positions 2 and 16 each coordinate deoxycholate. N79 lines the taurine pocket.

Belongs to the peptidase C59 family. In terms of assembly, homotetramer. The tetramer consists of a dimer of dimers.

The enzyme catalyses glycocholate + H2O = cholate + glycine. The catalysed reaction is glycodeoxycholate + H2O = deoxycholate + glycine. It carries out the reaction chenodeoxycholate + glycine = glycochenodeoxycholate + H2O. It catalyses the reaction cholate + taurine = taurocholate + H2O. The enzyme catalyses taurodeoxycholate + H2O = deoxycholate + taurine. The catalysed reaction is taurochenodeoxycholate + H2O = chenodeoxycholate + taurine. It carries out the reaction an L-alpha-amino acid + cholate = an N-choloyl-L-alpha-amino acid + H2O. It catalyses the reaction an L-alpha-amino acid + taurocholate = an N-choloyl-L-alpha-amino acid + taurine. The enzyme catalyses glycocholate + an L-alpha-amino acid = an N-choloyl-L-alpha-amino acid + glycine. It participates in lipid metabolism; bile acid biosynthesis. Functionally, possesses dual functions in bile acid metabolism. Acts as a bile salt hydrolase that catalyzes the deconjugation of glycine- and taurine-linked bile salts, which occurs naturally in the intestines of animals, releasing amino acid residues and deconjugated bile salts (bile acids). Can hydrolyze the amide bond in the bile salts glycocholate (GCA), glycodeoxycholate (GDCA), glycochenodeoxycholate (GCDCA), taurocholate (TCA), taurodeoxycholate (TDCA) and taurochenodeoxycholate (TCDCA). Shows a preference for glycine-conjugated bile acids as substrates. Also acts as an amine N-acyltransferase that conjugates a wide variety of amino acids to conjugated and non-conjugated bile acids, thus producing bacterial bile acid amidates (BBAAs) - also named microbially conjugated bile acids (MCBAs) - in the gastrointestinal tract. These BBAAs may facilitate communication between the microbiota and host through the activation of host ligand-activated transcription factors. This is Bile salt hydrolase/transferase from Lactiplantibacillus plantarum (strain ATCC BAA-793 / NCIMB 8826 / WCFS1) (Lactobacillus plantarum).